The chain runs to 371 residues: Transcription factor bHLH77 (371 aa).

Disordered stretches follow at residues 1–25 (MNMDKETEQTLNYLPLGQSDPFGNG), 65–206 (SGGI…SLAE), and 352–371 (QSNNNNNNCSEPTLQMKLEP). Polar residues predominate over residues 85 to 96 (SQPTTQESNKSS). Over residues 128-142 (SPASSSLTASNSKVS) the composition is skewed to low complexity. Basic and acidic residues predominate over residues 165 to 190 (GVEKCDSKGDNKDDAKPPEAPKDYIH). Residues 197–247 (QATDSHSLAERARREKISERMTLLQDLVPGCNRITGKAVMLDEIINYVQSL) enclose the bHLH domain.

In terms of assembly, homodimer. Interacts with IBH1. As to expression, expressed constitutively in roots, leaves, stems, and flowers.

It localises to the nucleus. The chain is Transcription factor bHLH77 (BHLH77) from Arabidopsis thaliana (Mouse-ear cress).